Reading from the N-terminus, the 1357-residue chain is DNA-directed RNA polymerase subunit beta (1357 aa).

This sequence belongs to the RNA polymerase beta chain family. The RNAP catalytic core consists of 2 alpha, 1 beta, 1 beta' and 1 omega subunit. When a sigma factor is associated with the core the holoenzyme is formed, which can initiate transcription.

It catalyses the reaction RNA(n) + a ribonucleoside 5'-triphosphate = RNA(n+1) + diphosphate. Functionally, DNA-dependent RNA polymerase catalyzes the transcription of DNA into RNA using the four ribonucleoside triphosphates as substrates. This chain is DNA-directed RNA polymerase subunit beta, found in Pseudomonas putida (strain ATCC 700007 / DSM 6899 / JCM 31910 / BCRC 17059 / LMG 24140 / F1).